A 397-amino-acid polypeptide reads, in one-letter code: MGLSWSPRPPLLMILLLVLSLWLPLGAGNSLATENRFVNSCTQARKKCEANPACKAAYQHLGSCTSSLSRPLPLEESAMSADCLEAAEQLRNSSLIDCRCHRRMKHQATCLDIYWTVHPARSLGDYELDVSPYEDTVTSKPWKMNLSKLNMLKPDSDLCLKFAMLCTLHDKCDRLRKAYGEACSGIRCQRHLCLAQLRSFFEKAAESHAQGLLLCPCAPEDAGCGERRRNTIAPSCALPSVTPNCLDLRSFCRADPLCRSRLMDFQTHCHPMDILGTCATEQSRCLRAYLGLIGTAMTPNFISKVNTTVALSCTCRGSGNLQDECEQLERSFSQNPCLVEAIAAKMRFHRQLFSQDWADSTFSVVQQQNSNPALRLQPRLPILSFSILPLILLQTLW.

The first 28 residues, 1 to 28 (MGLSWSPRPPLLMILLLVLSLWLPLGAG), serve as a signal peptide directing secretion. The cysteines at positions 48 and 54 are disulfide-linked. N-linked (GlcNAc...) asparagine glycosylation is found at N92 and N145. Disulfide bonds link C159–C215, C166–C172, C183–C193, C188–C236, C217–C224, C245–C313, C252–C258, C269–C285, C278–C337, and C315–C325. A glycan (N-linked (GlcNAc...) asparagine) is linked at N306. Residue N371 is the site of GPI-anchor amidated asparagine attachment. Positions 372–397 (PALRLQPRLPILSFSILPLILLQTLW) are cleaved as a propeptide — removed in mature form.

This sequence belongs to the GDNFR family. As to quaternary structure, interacts with ARTN ligand and RET: forms a 2:2:2 ternary complex composed of ARTN ligand, GFRA3 and RET receptor. Interacts with SORL1.

The protein localises to the cell membrane. Its function is as follows. Receptor for artemin (ARTN), a growth factor that supports the survival of sensory and sympathetic peripheral neurons. ARTN-binding leads to autophosphorylation and activation of the RET receptor. The protein is GDNF family receptor alpha-3 (Gfra3) of Mus musculus (Mouse).